Consider the following 607-residue polypeptide: 2-isopropylmalate synthase (607 aa).

A compositionally biased stretch (polar residues) spans 1–10 (MASFSESLSQ). Positions 1–40 (MASFSESLSQDPADAYKSAPSITKPMGPPSPGQPQWNPQR) are disordered. In terms of domain architecture, Pyruvate carboxyltransferase spans 75-349 (PLWCAVDLRD…DPQIDFSNID (275 aa)). D84, H288, H290, and N324 together coordinate Mg(2+). The segment at 491–607 (PVQPLERIKQ…VSAVNRAMPR (117 aa)) is regulatory domain.

The protein belongs to the alpha-IPM synthase/homocitrate synthase family. LeuA type 2 subfamily. In terms of assembly, homodimer. It depends on Mg(2+) as a cofactor.

Its subcellular location is the cytoplasm. It carries out the reaction 3-methyl-2-oxobutanoate + acetyl-CoA + H2O = (2S)-2-isopropylmalate + CoA + H(+). It participates in amino-acid biosynthesis; L-leucine biosynthesis; L-leucine from 3-methyl-2-oxobutanoate: step 1/4. Catalyzes the condensation of the acetyl group of acetyl-CoA with 3-methyl-2-oxobutanoate (2-ketoisovalerate) to form 3-carboxy-3-hydroxy-4-methylpentanoate (2-isopropylmalate). In Mycobacterium leprae (strain TN), this protein is 2-isopropylmalate synthase.